Consider the following 974-residue polypeptide: Translation initiation factor IF-2 (974 aa).

Disordered stretches follow at residues 67–86 (TRKHTSEIKQSDATGKARTI), 101–133 (DVAEGAEQGQAQVAEADDDAELKRREEEARREA), and 146–385 (RQER…TFQA). Residues 105-114 (GAEQGQAQVA) are compositionally biased toward low complexity. 2 stretches are compositionally biased toward basic and acidic residues: residues 121–133 (ELKRREEEARREA) and 146–181 (RQERLEREEAERRAREEAAEAERRRAEEEAAAKRAA). Over residues 182-197 (AEAAAAQQAAAQQAAE) the composition is skewed to low complexity. The span at 210–261 (EEARAAAERAAQREAAKKAEDAAREAADKARAEQEEIRKRREAAEAEARAIR) shows a compositional bias: basic and acidic residues. Low complexity predominate over residues 313–329 (PAGATPATTQAPAAGAG). Positions 358–371 (SSGGVDRGWRGGPK) are enriched in gly residues. One can recognise a tr-type G domain in the interval 474-643 (PRPPVVTVMG…LLQAEVLELK (170 aa)). The G1 stretch occupies residues 483–490 (GHVDHGKT). A GTP-binding site is contributed by 483 to 490 (GHVDHGKT). Positions 508–512 (GITQH) are G2. Residues 529–532 (DTPG) are G3. GTP contacts are provided by residues 529–533 (DTPGH) and 583–586 (NKID). Residues 583 to 586 (NKID) are G4. The segment at 619-621 (SAK) is G5.

The protein belongs to the TRAFAC class translation factor GTPase superfamily. Classic translation factor GTPase family. IF-2 subfamily.

It is found in the cytoplasm. Its function is as follows. One of the essential components for the initiation of protein synthesis. Protects formylmethionyl-tRNA from spontaneous hydrolysis and promotes its binding to the 30S ribosomal subunits. Also involved in the hydrolysis of GTP during the formation of the 70S ribosomal complex. The chain is Translation initiation factor IF-2 from Burkholderia vietnamiensis (strain G4 / LMG 22486) (Burkholderia cepacia (strain R1808)).